A 392-amino-acid polypeptide reads, in one-letter code: Stilbene synthase 3 (392 aa).

55 to 58 (KFNR) contributes to the substrate binding site. Cys164 is a catalytic residue. Residues Leu267 and 305–307 (GGP) contribute to the substrate site.

It belongs to the thiolase-like superfamily. Chalcone/stilbene synthases family. As to quaternary structure, homodimer.

It is found in the cytoplasm. It catalyses the reaction 4-coumaroyl-CoA + 3 malonyl-CoA + 3 H(+) = trans-resveratrol + 4 CO2 + 4 CoA. The protein operates within phytoalexin biosynthesis; 3,4',5-trihydroxystilbene biosynthesis; 3,4',5-trihydroxystilbene from trans-4-coumarate: step 2/2. Mediates resistance to pathogens which are sensitive to stilbenes. This chain is Stilbene synthase 3, found in Vitis vinifera (Grape).